A 330-amino-acid chain; its full sequence is Src kinase-associated phosphoprotein 2-B (330 aa).

The interval 57–84 (DKAEDDDQEENDGFPLPPDAVSLASDRD) is disordered. Positions 59-68 (AEDDDQEEND) are enriched in acidic residues. A PH domain is found at 105–208 (EYLKAGYLEK…WINAIMNSRG (104 aa)). The disordered stretch occupies residues 236 to 261 (ELPEESEKPVTETETQKATPVPVNNT). The span at 240-250 (ESEKPVTETET) shows a compositional bias: basic and acidic residues. Residues 251–261 (QKATPVPVNNT) are compositionally biased toward polar residues. Residues 268-329 (DYANFYRGLW…PKAYIIEMYD (62 aa)) enclose the SH3 domain.

Belongs to the SKAP family. Post-translationally, phosphorylated on tyrosines.

It is found in the cytoplasm. May be involved in B-cell and macrophage adhesion processes. May play a role in src signaling pathway. The polypeptide is Src kinase-associated phosphoprotein 2-B (skap2-b) (Xenopus laevis (African clawed frog)).